A 341-amino-acid chain; its full sequence is Ketol-acid reductoisomerase (NADP(+)) (341 aa).

In terms of domain architecture, KARI N-terminal Rossmann spans Met1–Thr182. NADP(+) contacts are provided by residues Tyr25–Gln28, Lys48, Ser51, Ser53, and Asp83–Gln86. The active site involves His108. Gly134 is an NADP(+) binding site. The 146-residue stretch at Thr183–Gln328 folds into the KARI C-terminal knotted domain. 4 residues coordinate Mg(2+): Asp191, Glu195, Glu227, and Glu231. Ser252 lines the substrate pocket.

It belongs to the ketol-acid reductoisomerase family. It depends on Mg(2+) as a cofactor.

It catalyses the reaction (2R)-2,3-dihydroxy-3-methylbutanoate + NADP(+) = (2S)-2-acetolactate + NADPH + H(+). The enzyme catalyses (2R,3R)-2,3-dihydroxy-3-methylpentanoate + NADP(+) = (S)-2-ethyl-2-hydroxy-3-oxobutanoate + NADPH + H(+). Its pathway is amino-acid biosynthesis; L-isoleucine biosynthesis; L-isoleucine from 2-oxobutanoate: step 2/4. The protein operates within amino-acid biosynthesis; L-valine biosynthesis; L-valine from pyruvate: step 2/4. In terms of biological role, involved in the biosynthesis of branched-chain amino acids (BCAA). Catalyzes an alkyl-migration followed by a ketol-acid reduction of (S)-2-acetolactate (S2AL) to yield (R)-2,3-dihydroxy-isovalerate. In the isomerase reaction, S2AL is rearranged via a Mg-dependent methyl migration to produce 3-hydroxy-3-methyl-2-ketobutyrate (HMKB). In the reductase reaction, this 2-ketoacid undergoes a metal-dependent reduction by NADPH to yield (R)-2,3-dihydroxy-isovalerate. The polypeptide is Ketol-acid reductoisomerase (NADP(+)) (Pseudarthrobacter chlorophenolicus (strain ATCC 700700 / DSM 12829 / CIP 107037 / JCM 12360 / KCTC 9906 / NCIMB 13794 / A6) (Arthrobacter chlorophenolicus)).